Consider the following 525-residue polypeptide: Eukaryotic translation initiation factor 3 subunit L (525 aa).

Over residues methionine 1 to tyrosine 19 the composition is skewed to acidic residues. A disordered region spans residues methionine 1–glycine 21. The PCI domain maps to aspartate 296–arginine 502.

This sequence belongs to the eIF-3 subunit L family. In terms of assembly, component of the eukaryotic translation initiation factor 3 (eIF-3) complex.

It localises to the cytoplasm. Component of the eukaryotic translation initiation factor 3 (eIF-3) complex, which is involved in protein synthesis of a specialized repertoire of mRNAs and, together with other initiation factors, stimulates binding of mRNA and methionyl-tRNAi to the 40S ribosome. The eIF-3 complex specifically targets and initiates translation of a subset of mRNAs involved in cell proliferation. The polypeptide is Eukaryotic translation initiation factor 3 subunit L (Nematostella vectensis (Starlet sea anemone)).